The primary structure comprises 625 residues: MTNNMNNYPLLSLINSPEDLRLLNKDQLPQLCQELRAYLLESVSQTSGHLASGLGTVELTVALHYVYKTPFDQLIWDVGHQAYPHKILTGRREQMSTIRQKDGIHPFPWREESEFDVLSVGHSSTSISAGLGIAVAAERENAGRKTVCVIGDGAITAGMAFEALNHAGALHTDMLVILNDNEMSISENVGALNNHLARIFSGSLYSTLRDGSKKILDKVPPIKNFMKKTEEHMKGVMFSPESTLFEELGFNYIGPVDGHNIDELVATLTNMRNLKGPQFLHIKTKKGKGYAPAEKDPIGFHGVPKFDPISGELPKNNSKPTYSKIFGDWLCEMAEKDAKIIGITPAMREGSGMVEFSQRFPKQYFDVAIAEQHAVTFATGLAIGGYKPVVAIYSTFLQRAYDQLIHDVAIQNLPVLFAIDRAGIVGADGATHQGAFDISFMRCIPNMIIMTPSDENECRQMLYTGYQCGKPAAVRYPRGNAVGVKLTPLEMLPIGKSRLIRKGQKIAILNFGTLLPSALELSEKLNATVVDMRFVKPIDIEMINVLAQTHDYLVTLEENAIQGGAGSAVAEVLNSSGKSTALLQLGLPDYFIPQATQQEALADLGLDTKGIEEKILNFIAKQGNL.

Thiamine diphosphate contacts are provided by residues His80 and 121-123; that span reads GHS. Asp152 contacts Mg(2+). Thiamine diphosphate-binding positions include 153–154, Asn181, Tyr290, and Glu371; that span reads GA. Asn181 is a Mg(2+) binding site.

The protein belongs to the transketolase family. DXPS subfamily. As to quaternary structure, homodimer. Mg(2+) is required as a cofactor. It depends on thiamine diphosphate as a cofactor.

The enzyme catalyses D-glyceraldehyde 3-phosphate + pyruvate + H(+) = 1-deoxy-D-xylulose 5-phosphate + CO2. Its pathway is metabolic intermediate biosynthesis; 1-deoxy-D-xylulose 5-phosphate biosynthesis; 1-deoxy-D-xylulose 5-phosphate from D-glyceraldehyde 3-phosphate and pyruvate: step 1/1. In terms of biological role, catalyzes the acyloin condensation reaction between C atoms 2 and 3 of pyruvate and glyceraldehyde 3-phosphate to yield 1-deoxy-D-xylulose-5-phosphate (DXP). The protein is 1-deoxy-D-xylulose-5-phosphate synthase of Haemophilus influenzae (strain ATCC 51907 / DSM 11121 / KW20 / Rd).